The primary structure comprises 1024 residues: Beta-galactosidase (1024 aa).

Substrate-binding residues include Asn103 and Asp202. Position 202 (Asp202) interacts with Na(+). Mg(2+) is bound by residues Glu417, His419, and Glu462. Substrate contacts are provided by residues Glu462 and 538–541; that span reads EYAH. The active-site Proton donor is the Glu462. The Nucleophile role is filled by Glu538. Asn598 provides a ligand contact to Mg(2+). Na(+) contacts are provided by Phe602 and Asn605. Residues Asn605 and Trp1000 each coordinate substrate.

This sequence belongs to the glycosyl hydrolase 2 family. Homotetramer. It depends on Mg(2+) as a cofactor. The cofactor is Na(+).

It carries out the reaction Hydrolysis of terminal non-reducing beta-D-galactose residues in beta-D-galactosides.. In Klebsiella pneumoniae, this protein is Beta-galactosidase.